Here is a 625-residue protein sequence, read N- to C-terminus: MSGVEEISTLDEFRERRSDFEISEDERRRSKIGNLKKKAINASTKFTHSLKKRGKRKIDYRVPAVSIEDVRDEKEESVVLEFRRKLLERDLLPPRHDEYHTLLRFLKARDLNIEKTTQLWEEMLRWRKEYGTDTILEDFDFEELEEVLQYYPQGYHGVDKEGRPVYIERLGKAHPSKLMRITTIDRYLKYHVQEFERALQEKFPACSIAAKRRICSTTTILDVQGLGIKNFTPTAANLVAAMSKIDNSYYPETLHRMYIVNAGTGFKKMLWPAAQKFLDAKTIAKIHVLEPKSLFKLHEVIDSSQLPEFLGGSCSCFGDGGGCLRSNKGPWNDPEIMKLIYHGESSLFRQSTRKLTDPHYSSSYISIHPSKAIQAETSAAESISCSDVPSSPTGRLCSASSHVNSAYEEARASDVNGYYSCDDKFAIPDKATNRKGQERQSQYQMRELNATTIGLKCETSSPGAPIIRWLHDLRVMIDKIKCENLAKRLLSLMLKLAAVFRYTPLELLRSQTTVSPSSLTEDDSRCSLISPPPREPTMKDRILPCLERIQKLEKSYEDIRNKPVAIPVEKERMLMDSLDRIKSVEFDLDKTKRLLHATVMKQMEITEMLQNIRDSQLHRRRRLFC.

The CRAL-TRIO domain maps to 143–318; sequence ELEEVLQYYP…FLGGSCSCFG (176 aa).

This sequence belongs to the SFH family.

The protein resides in the golgi apparatus membrane. The protein localises to the cell membrane. In terms of biological role, required for transport of secretory proteins from the Golgi complex. Catalyzes the transfer of phosphatidylinositol and phosphatidylcholine between membranes in vitro. The protein is Phosphatidylinositol/phosphatidylcholine transfer protein SFH13 (SFH13) of Arabidopsis thaliana (Mouse-ear cress).